A 191-amino-acid polypeptide reads, in one-letter code: Cell division protein SepF (191 aa).

Low complexity predominate over residues 150-164 (TSSSPEEASPSSVST). Residues 150 to 191 (TSSSPEEASPSSVSTENTPQYSLGKNTTPEPAWGNSKLSAYS) are disordered. A compositionally biased stretch (polar residues) spans 165 to 178 (ENTPQYSLGKNTTP).

This sequence belongs to the SepF family. In terms of assembly, homodimer. Interacts with FtsZ.

It is found in the cytoplasm. Functionally, cell division protein that is part of the divisome complex and is recruited early to the Z-ring. Probably stimulates Z-ring formation, perhaps through the cross-linking of FtsZ protofilaments. Its function overlaps with FtsA. In Prochlorococcus marinus (strain AS9601), this protein is Cell division protein SepF.